The sequence spans 459 residues: ATP synthase subunit beta (459 aa).

148–155 (GGAGVGKT) lines the ATP pocket.

This sequence belongs to the ATPase alpha/beta chains family. In terms of assembly, F-type ATPases have 2 components, CF(1) - the catalytic core - and CF(0) - the membrane proton channel. CF(1) has five subunits: alpha(3), beta(3), gamma(1), delta(1), epsilon(1). CF(0) has three main subunits: a(1), b(2) and c(9-12). The alpha and beta chains form an alternating ring which encloses part of the gamma chain. CF(1) is attached to CF(0) by a central stalk formed by the gamma and epsilon chains, while a peripheral stalk is formed by the delta and b chains.

The protein resides in the cell inner membrane. It carries out the reaction ATP + H2O + 4 H(+)(in) = ADP + phosphate + 5 H(+)(out). Functionally, produces ATP from ADP in the presence of a proton gradient across the membrane. The catalytic sites are hosted primarily by the beta subunits. The protein is ATP synthase subunit beta of Hahella chejuensis (strain KCTC 2396).